Reading from the N-terminus, the 122-residue chain is UPF0382 membrane protein SERP0230 (122 aa).

Transmembrane regions (helical) follow at residues 3-23 (VFIILGALNAMMAVGTGAFGA), 46-66 (MYHGLGLLVIGLISGTTSINV), 69-89 (AGWLLFFGIVFFSGSLYFLAL), and 98-118 (ITPIGGVLFIIGWLVLVIATL).

Belongs to the UPF0382 family.

It is found in the cell membrane. The sequence is that of UPF0382 membrane protein SERP0230 from Staphylococcus epidermidis (strain ATCC 35984 / DSM 28319 / BCRC 17069 / CCUG 31568 / BM 3577 / RP62A).